The sequence spans 250 residues: Glycerol uptake facilitator protein-like 5 (250 aa).

2 helical membrane-spanning segments follow: residues 12–32 (EFFG…NAFL) and 46–66 (GGWL…AMMF). Residues 75–77 (NPA) carry the NPA 1 motif. 3 helical membrane passes run 85-105 (IGIF…LGAI), 142-162 (LNGF…AMGL), and 172-192 (IDIA…SLGG). An NPA 2 motif is present at residues 199-201 (NPA). Residues 230-250 (VVAPIVGAVIGIWIYKIFFGL) form a helical membrane-spanning segment.

This sequence belongs to the MIP/aquaporin (TC 1.A.8) family.

The protein localises to the cell membrane. Functionally, probable transporter that facilitates the transmembrane diffusion of an unknown substrate. Is not permeable to water, dihydroxyacetone, glycerol, urea, H(2)O(2) and D/L-lactic acid. This chain is Glycerol uptake facilitator protein-like 5, found in Lactiplantibacillus plantarum (strain ATCC BAA-793 / NCIMB 8826 / WCFS1) (Lactobacillus plantarum).